The primary structure comprises 44 residues: Photosystem I reaction center subunit IX (44 aa).

Residues 7–27 (YLSVAPVLATLWFGSLAGLLI) traverse the membrane as a helical segment.

Belongs to the PsaJ family.

It is found in the plastid. It localises to the chloroplast thylakoid membrane. In terms of biological role, may help in the organization of the PsaE and PsaF subunits. The polypeptide is Photosystem I reaction center subunit IX (Illicium oligandrum (Star anise)).